Here is a 384-residue protein sequence, read N- to C-terminus: Multidrug/solvent efflux pump periplasmic linker protein MepA (384 aa).

An N-terminal signal peptide occupies residues 1 to 22 (MQFKPAVTALVSAVALATLLSG). Residue Cys23 is the site of N-palmitoyl cysteine attachment. Cys23 carries S-diacylglycerol cysteine lipidation. Positions 115–155 (LAERYKQLIDEQAVSKQEYDDANAKRLQAEASLKSAQIDLR) form a coiled coil. Residues 362–384 (ATNVKKPAGPDQANAAKADAKAE) are disordered. The segment covering 368-378 (PAGPDQANAAK) has biased composition (low complexity).

It belongs to the membrane fusion protein (MFP) (TC 8.A.1) family.

It localises to the cell inner membrane. Its function is as follows. The periplasmic linker protein component of an organic solvent and antibiotic efflux pump; confers resistance to toluene, hexane, p-xylene, ampicillin, penicillin G, erythromycin, novobiocin and tetracycline. The chain is Multidrug/solvent efflux pump periplasmic linker protein MepA (mepA) from Pseudomonas putida (Arthrobacter siderocapsulatus).